Consider the following 73-residue polypeptide: Putative sulfur carrier protein AF_0556 (73 aa).

The active-site Cysteine persulfide intermediate is Cys-11.

The protein belongs to the sulfur carrier protein TusA family.

The polypeptide is Putative sulfur carrier protein AF_0556 (Archaeoglobus fulgidus (strain ATCC 49558 / DSM 4304 / JCM 9628 / NBRC 100126 / VC-16)).